Here is a 205-residue protein sequence, read N- to C-terminus: Ribosome maturation factor RimP (205 aa).

It belongs to the RimP family.

It is found in the cytoplasm. Functionally, required for maturation of 30S ribosomal subunits. The sequence is that of Ribosome maturation factor RimP from Sinorhizobium fredii (strain NBRC 101917 / NGR234).